The chain runs to 163 residues: Nucleotide-binding protein MT0592 (163 aa).

The protein belongs to the YajQ family.

Nucleotide-binding protein. The protein is Nucleotide-binding protein MT0592 of Mycobacterium tuberculosis (strain CDC 1551 / Oshkosh).